A 158-amino-acid polypeptide reads, in one-letter code: Large ribosomal subunit protein uL15 (158 aa).

Disordered stretches follow at residues 1–53 (MRIH…FEGG) and 138–158 (ESAGGSCQDLSDTSNAPSNNE). Residues 23 to 35 (ISAGQGASGGFGM) show a composition bias toward gly residues. The segment covering 145 to 158 (QDLSDTSNAPSNNE) has biased composition (polar residues).

It belongs to the universal ribosomal protein uL15 family. As to quaternary structure, part of the 50S ribosomal subunit.

Its function is as follows. Binds to the 23S rRNA. The chain is Large ribosomal subunit protein uL15 from Crocosphaera subtropica (strain ATCC 51142 / BH68) (Cyanothece sp. (strain ATCC 51142)).